A 74-amino-acid polypeptide reads, in one-letter code: Small ribosomal subunit protein eS28 (74 aa).

It belongs to the eukaryotic ribosomal protein eS28 family.

The polypeptide is Small ribosomal subunit protein eS28 (Halorubrum lacusprofundi (strain ATCC 49239 / DSM 5036 / JCM 8891 / ACAM 34)).